A 279-amino-acid polypeptide reads, in one-letter code: S-methyl-5'-thioadenosine phosphorylase (279 aa).

Phosphate contacts are provided by residues Ser-13, 55–56 (RH), and 88–89 (TA). A substrate-binding site is contributed by Met-191. A phosphate-binding site is contributed by Thr-192. 215 to 217 (DYD) provides a ligand contact to substrate.

This sequence belongs to the PNP/MTAP phosphorylase family. MTAP subfamily. Homotrimer.

Its subcellular location is the cytoplasm. The protein resides in the nucleus. It catalyses the reaction S-methyl-5'-thioadenosine + phosphate = 5-(methylsulfanyl)-alpha-D-ribose 1-phosphate + adenine. Its pathway is amino-acid biosynthesis; L-methionine biosynthesis via salvage pathway; S-methyl-5-thio-alpha-D-ribose 1-phosphate from S-methyl-5'-thioadenosine (phosphorylase route): step 1/1. Catalyzes the reversible phosphorylation of S-methyl-5'-thioadenosine (MTA) to adenine and 5-methylthioribose-1-phosphate. Involved in the breakdown of MTA, a major by-product of polyamine biosynthesis. Responsible for the first step in the methionine salvage pathway after MTA has been generated from S-adenosylmethionine. Has broad substrate specificity with 6-aminopurine nucleosides as preferred substrates. In Aedes aegypti (Yellowfever mosquito), this protein is S-methyl-5'-thioadenosine phosphorylase.